The chain runs to 1103 residues: Ubiquitin carboxyl-terminal hydrolase 7 (1103 aa).

Positions 1–11 (MNHQQQQQQQQ) are enriched in low complexity. The tract at residues 1-40 (MNHQQQQQQQQKAGEQQLSEPEDMEMEAGDTDDPPRITQN) is disordered. Residues 1 to 209 (MNHQQQQQQQ…APHGVAWDSK (209 aa)) form an interaction with TSPYL5 region. Ser19 is modified (phosphoserine). Residues 20 to 32 (EPEDMEMEAGDTD) show a composition bias toward acidic residues. Phosphoserine is present on residues Ser50 and Ser54. Residues 54 to 209 (SNAEEDMEDD…APHGVAWDSK (156 aa)) form an interaction with p53/TP53 and MDM2 region. Residues 69–196 (EATFQFTVER…DDKVTFEVFV (128 aa)) form the MATH domain. Residues 71–206 (TFQFTVERFS…QADAPHGVAW (136 aa)) form a necessary for nuclear localization region. One can recognise a USP domain in the interval 215–522 (VGLKNQGATC…NAYMLVYIRE (308 aa)). Cys224 acts as the Nucleophile in catalysis. His465 serves as the catalytic Proton acceptor. Lys870 carries the N6-acetyllysine; alternate modification. Lys870 participates in a covalent cross-link: Glycyl lysine isopeptide (Lys-Gly) (interchain with G-Cter in SUMO2); alternate. A Glycyl lysine isopeptide (Lys-Gly) (interchain with G-Cter in ubiquitin); alternate cross-link involves residue Lys870. Residue Lys883 forms a Glycyl lysine isopeptide (Lys-Gly) (interchain with G-Cter in SUMO2) linkage. Ser964 carries the phosphoserine modification. An N6-acetyllysine mark is found at Lys1085 and Lys1097.

Belongs to the peptidase C19 family. As to quaternary structure, monomer. Homodimer. Part of a complex with DAXX, MDM2, RASSF1 and USP7. Part of a complex with DAXX, MDM2 and USP7. Interacts with MDM2; the interaction is independent of p53/TP53. Interacts with DAXX; the interaction is direct and independent of MDM2 and p53/TP53. Component of a complex composed of KMT2E, OGT and USP7; the complex stabilizes KMT2E, preventing KMT2E ubiquitination and proteasomal-mediated degradation. Interacts (via MATH domain) with KMT2E. Interacts with OGT. Interacts with FOXO4; the interaction is enhanced in presence of hydrogen peroxide and occurs independently of p53/TP53. Interacts with p53/TP53; the interaction is enhanced in response to DNA damage; the interaction is impaired by TSPYL5. Interacts with PTEN; the interaction is direct. Interacts with ATXN1 and the strength of interaction is influenced by the length of the poly-Gln region in ATXN1. A weaker interaction seen with mutants having longer poly-Gln regions. Interacts with KIAA1530/UVSSA. Interacts with MEX3C and antagonizes its ability to degrade mRNA. Interacts with DNMT1 and UHRF1. Interacts with FOXP3. Interacts (via MATH domain) with RNF220. Associated component of the Polycomb group (PcG) multiprotein PRC1-like complex. Interacts with EPOP. Interacts with OTUD4 and USP9X; the interaction is direct. Interacts with CRY2. Interacts with REST. Interacts with ERCC6. Part of a complex consisting of USP7, MAGEL2 and TRIM27; directly interacts with MAGEL2; directly interacts with TRIM27. Post-translationally, polyneddylated. Not sumoylated. In terms of processing, ubiquitinated at Lys-870. Polyubiquitinated. In terms of tissue distribution, strongly expressed in the testis, spleen and brain. Weakly expressed in the stomach, small intestine, skeletal muscle and uterus.

It localises to the nucleus. The protein localises to the cytoplasm. The protein resides in the PML body. It is found in the chromosome. It catalyses the reaction Thiol-dependent hydrolysis of ester, thioester, amide, peptide and isopeptide bonds formed by the C-terminal Gly of ubiquitin (a 76-residue protein attached to proteins as an intracellular targeting signal).. Functionally, hydrolase that deubiquitinates target proteins such as ARMC5, FOXO4, DEPTOR, KAT5, p53/TP53, MDM2, ERCC6, DNMT1, UHRF1, PTEN, KMT2E/MLL5 and DAXX. Together with DAXX, prevents MDM2 self-ubiquitination and enhances the E3 ligase activity of MDM2 towards p53/TP53, thereby promoting p53/TP53 ubiquitination and proteasomal degradation. Deubiquitinates p53/TP53, preventing degradation of p53/TP53, and enhances p53/TP53-dependent transcription regulation, cell growth repression and apoptosis. Deubiquitinates p53/TP53 and MDM2 and strongly stabilizes p53/TP53 even in the presence of excess MDM2, and also induces p53/TP53-dependent cell growth repression and apoptosis. Deubiquitination of FOXO4 in presence of hydrogen peroxide is not dependent on p53/TP53 and inhibits FOXO4-induced transcriptional activity. In association with DAXX, is involved in the deubiquitination and translocation of PTEN from the nucleus to the cytoplasm, both processes that are counteracted by PML. Deubiquitinates KMT2E preventing KMT2E proteasomal-mediated degradation. Involved in cell proliferation during early embryonic development. Involved in transcription-coupled nucleotide excision repair (TC-NER) in response to UV damage: recruited to DNA damage sites following interaction with KIAA1530/UVSSA and promotes deubiquitination of ERCC6, preventing UV-induced degradation of ERCC6. Involved in maintenance of DNA methylation via its interaction with UHRF1 and DNMT1: acts by mediating deubiquitination of UHRF1 and DNMT1, preventing their degradation and promoting DNA methylation by DNMT1. Deubiquitinates alkylation repair enzyme ALKBH3. OTUD4 recruits USP7 and USP9X to stabilize ALKBH3, thereby promoting the repair of alkylated DNA lesions. Acts as a chromatin regulator via its association with the Polycomb group (PcG) multiprotein PRC1-like complex; may act by deubiquitinating components of the PRC1-like complex. Able to mediate deubiquitination of histone H2B; it is however unsure whether this activity takes place in vivo. Exhibits a preference towards 'Lys-48'-linked ubiquitin chains. Increases regulatory T-cells (Treg) suppressive capacity by deubiquitinating and stabilizing transcription factor FOXP3 which is crucial for Treg cell function. Plays a role in the maintenance of the circadian clock periodicity via deubiquitination and stabilization of the CRY1 and CRY2 proteins. Deubiquitinates REST, thereby stabilizing REST and promoting the maintenance of neural progenitor cells. Deubiquitinates SIRT7, inhibiting SIRT7 histone deacetylase activity and regulating gluconeogenesis. Involved in the regulation of WASH-dependent actin polymerization at the surface of endosomes and the regulation of endosomal protein recycling. It maintains optimal WASH complex activity and precise F-actin levels via deubiquitination of TRIM27 and WASHC1. Mediates the deubiquitination of phosphorylated DEPTOR, promoting its stability and leading to decreased mTORC1 signaling. This Rattus norvegicus (Rat) protein is Ubiquitin carboxyl-terminal hydrolase 7 (Usp7).